The following is a 353-amino-acid chain: Photosystem II D2 protein (353 aa).

An N-acetylthreonine modification is found at Thr2. Thr2 is subject to Phosphothreonine. The chain crosses the membrane as a helical span at residues 41-61 (CAYFAVGGWFTGTTFVTSWYT). His118 serves as a coordination point for chlorophyll a. A helical transmembrane segment spans residues 125–141 (GFMLRQFELARSVQLRP). 2 residues coordinate pheophytin a: Gln130 and Asn143. The helical transmembrane segment at 153-166 (VFVSVFLIYPLGQS) threads the bilayer. Position 198 (His198) interacts with chlorophyll a. A helical transmembrane segment spans residues 208–228 (AALLCAIHGATVENTLFEDGD). Residues His215 and Phe262 each contribute to the a plastoquinone site. His215 contacts Fe cation. His269 is a Fe cation binding site. A helical transmembrane segment spans residues 279–295 (GLWMSALGVVGLALNLR).

The protein belongs to the reaction center PufL/M/PsbA/D family. In terms of assembly, PSII is composed of 1 copy each of membrane proteins PsbA, PsbB, PsbC, PsbD, PsbE, PsbF, PsbH, PsbI, PsbJ, PsbK, PsbL, PsbM, PsbT, PsbX, PsbY, PsbZ, Psb30/Ycf12, at least 3 peripheral proteins of the oxygen-evolving complex and a large number of cofactors. It forms dimeric complexes. The D1/D2 heterodimer binds P680, chlorophylls that are the primary electron donor of PSII, and subsequent electron acceptors. It shares a non-heme iron and each subunit binds pheophytin, quinone, additional chlorophylls, carotenoids and lipids. There is also a Cl(-1) ion associated with D1 and D2, which is required for oxygen evolution. The PSII complex binds additional chlorophylls, carotenoids and specific lipids. serves as cofactor.

The protein localises to the plastid. The protein resides in the chloroplast thylakoid membrane. The enzyme catalyses 2 a plastoquinone + 4 hnu + 2 H2O = 2 a plastoquinol + O2. Functionally, photosystem II (PSII) is a light-driven water:plastoquinone oxidoreductase that uses light energy to abstract electrons from H(2)O, generating O(2) and a proton gradient subsequently used for ATP formation. It consists of a core antenna complex that captures photons, and an electron transfer chain that converts photonic excitation into a charge separation. The D1/D2 (PsbA/PsbD) reaction center heterodimer binds P680, the primary electron donor of PSII as well as several subsequent electron acceptors. D2 is needed for assembly of a stable PSII complex. The polypeptide is Photosystem II D2 protein (Nicotiana tabacum (Common tobacco)).